The chain runs to 239 residues: MATPHINAEMGDFADVVLMPGDPLRAKHIAETSLEDVREVNNVRGMLGFTGTYKGRKISVMGHGMGIPSCSIYTKELITDFGVKKIIRVGSCGAVRMDVKLSDVVIGMGACTDSKVNRIRFKDHDFAAIADFDMVRNAVDAAKALGVDARVGNLFSADLFYSPDGEMFDVMEKYGVLGVEMEAAGIYGVAAEFGAKALTICTVSDHIRTHEQTTAAERQTTFNDMIKIALESVLLGDQE.

His5 provides a ligand contact to a purine D-ribonucleoside. Phosphate is bound by residues Gly21, Arg25, Arg44, and 88–91 (RVGS). A purine D-ribonucleoside-binding positions include 180–182 (EME) and 204–205 (SD). Catalysis depends on Asp205, which acts as the Proton donor.

It belongs to the PNP/UDP phosphorylase family. As to quaternary structure, homohexamer; trimer of homodimers.

The enzyme catalyses a purine D-ribonucleoside + phosphate = a purine nucleobase + alpha-D-ribose 1-phosphate. It carries out the reaction a purine 2'-deoxy-D-ribonucleoside + phosphate = a purine nucleobase + 2-deoxy-alpha-D-ribose 1-phosphate. Its function is as follows. Catalyzes the reversible phosphorolytic breakdown of the N-glycosidic bond in the beta-(deoxy)ribonucleoside molecules, with the formation of the corresponding free purine bases and pentose-1-phosphate. This is Purine nucleoside phosphorylase DeoD-type from Salmonella gallinarum (strain 287/91 / NCTC 13346).